A 37-amino-acid polypeptide reads, in one-letter code: Photosystem II reaction center protein T (37 aa).

Residues 3 to 23 (ALVYTFLLVGTLGIIFFAIFF) form a helical membrane-spanning segment.

This sequence belongs to the PsbT family. As to quaternary structure, PSII is composed of 1 copy each of membrane proteins PsbA, PsbB, PsbC, PsbD, PsbE, PsbF, PsbH, PsbI, PsbJ, PsbK, PsbL, PsbM, PsbT, PsbY, PsbZ, Psb30/Ycf12, at least 3 peripheral proteins of the oxygen-evolving complex and a large number of cofactors. It forms dimeric complexes.

It localises to the plastid. It is found in the chloroplast thylakoid membrane. Found at the monomer-monomer interface of the photosystem II (PS II) dimer, plays a role in assembly and dimerization of PSII. PSII is a light-driven water plastoquinone oxidoreductase, using light energy to abstract electrons from H(2)O, generating a proton gradient subsequently used for ATP formation. This is Photosystem II reaction center protein T from Spirogyra maxima (Green alga).